Reading from the N-terminus, the 726-residue chain is Catalase-peroxidase (726 aa).

Residues 1 to 33 form a disordered region; that stretch reads MSTSDDIHNTTATGKCPFHQGGHDQSAGAGTTT. Positions 105 to 226 form a cross-link, tryptophyl-tyrosyl-methioninium (Trp-Tyr) (with M-252); that stretch reads WHGAGTYRSI…LGATEMGLIY (122 aa). The active-site Proton acceptor is His106. Residues 226–252 constitute a cross-link (tryptophyl-tyrosyl-methioninium (Tyr-Met) (with W-105)); it reads YVNPEGPDHSGEPLSAAAAIRATFGNM. His267 contributes to the heme b binding site.

This sequence belongs to the peroxidase family. Peroxidase/catalase subfamily. Homodimer or homotetramer. Requires heme b as cofactor. In terms of processing, formation of the three residue Trp-Tyr-Met cross-link is important for the catalase, but not the peroxidase activity of the enzyme.

It carries out the reaction H2O2 + AH2 = A + 2 H2O. The enzyme catalyses 2 H2O2 = O2 + 2 H2O. Bifunctional enzyme with both catalase and broad-spectrum peroxidase activity. The polypeptide is Catalase-peroxidase (Escherichia coli (strain K12 / DH10B)).